The chain runs to 301 residues: Acetyl-coenzyme A carboxylase carboxyl transferase subunit beta (301 aa).

The 270-residue stretch at 25 to 294 (LWIKCPETGE…SAANDMNGGA (270 aa)) folds into the CoA carboxyltransferase N-terminal domain.

Belongs to the AccD/PCCB family. Acetyl-CoA carboxylase is a heterohexamer composed of biotin carboxyl carrier protein (AccB), biotin carboxylase (AccC) and two subunits each of ACCase subunit alpha (AccA) and ACCase subunit beta (AccD).

It is found in the cytoplasm. It carries out the reaction N(6)-carboxybiotinyl-L-lysyl-[protein] + acetyl-CoA = N(6)-biotinyl-L-lysyl-[protein] + malonyl-CoA. It functions in the pathway lipid metabolism; malonyl-CoA biosynthesis; malonyl-CoA from acetyl-CoA: step 1/1. Its function is as follows. Component of the acetyl coenzyme A carboxylase (ACC) complex. Biotin carboxylase (BC) catalyzes the carboxylation of biotin on its carrier protein (BCCP) and then the CO(2) group is transferred by the transcarboxylase to acetyl-CoA to form malonyl-CoA. This chain is Acetyl-coenzyme A carboxylase carboxyl transferase subunit beta, found in Rhizobium etli (strain CIAT 652).